Consider the following 85-residue polypeptide: Toxin TdNa9 (85 aa).

The N-terminal stretch at 1–21 is a signal peptide; that stretch reads MLKFAIAVALLLFIGLELREA. The 63-residue stretch at 22–84 folds into the LCN-type CS-alpha/beta domain; the sequence is RDGYPQSKVN…YGDPGTKPCM (63 aa). Cystine bridges form between Cys-33-Cys-83, Cys-37-Cys-58, Cys-43-Cys-63, and Cys-47-Cys-65.

This sequence belongs to the long (4 C-C) scorpion toxin superfamily. Sodium channel inhibitor family. Beta subfamily. Expressed by the venom gland.

Its subcellular location is the secreted. Alpha toxins bind voltage-independently at site-3 of sodium channels (Nav) and inhibit the inactivation of the activated channels, thereby blocking neuronal transmission. This toxin binds, in vitro, to sodium channels and inhibits the inactivation of the activated channels. Seems not toxic to mice, crickets and sweet-water shrimps. This chain is Toxin TdNa9, found in Tityus discrepans (Venezuelan scorpion).